We begin with the raw amino-acid sequence, 129 residues long: Small ribosomal subunit protein uS11 (129 aa).

It belongs to the universal ribosomal protein uS11 family. Part of the 30S ribosomal subunit. Interacts with proteins S7 and S18. Binds to IF-3.

In terms of biological role, located on the platform of the 30S subunit, it bridges several disparate RNA helices of the 16S rRNA. Forms part of the Shine-Dalgarno cleft in the 70S ribosome. The sequence is that of Small ribosomal subunit protein uS11 from Serratia proteamaculans (strain 568).